Here is a 634-residue protein sequence, read N- to C-terminus: MTVETQKETLGFQTEVKQLLHLMIHSLYSNKEIFLRELISNASDAADKLRFEALAKPELFEGDADLKIRLSFDKDAGTVTLEDNGIGMSREDVIAHLGTIAKSGTADFMKNLTGDQKKDSHLIGQFGVGFYSAFIVADKVDVYSRRAGQPAAEGVHWSSKGEGEFEVATIDKPQRGTRIVLHLKKDEQEFADGWRLRNVVKKYSDHIALPIQLPKEQAATEGEEQPAEEWETVNRASALWTRSRTEVKDEEYQEFYKHIGHDFENPLAWSHNKVEGKLEYNSLLYVPARAPFDLYQREAPRGLKLYVQRVFIMDQAESFLPLYLRFIKGVVDSNDLSLNVSREILQKDPIIDSMKTALTKRVLDMLEKLAKNEPEKYKGFWKNFGQVLKEGPAEDFANKEKIAGLLRFASTQDDSGEQSVALADYLARAKEGQDKIYYLTGESYAQVKNSPHLEVFRKKGIEVLLLTDRIDEWLMSYLNEFDGKAFVDIARGDLDLGKLDSEEDKKAQEEVAKDKEGLVERLKGALGDSVAEVRVSHRLTDSPAILAIGEQDLGLQMRQILEASGQKVPESKPIFEFNPSHPLIEKLDHEQSEDRFAELSHILFDQAALAAGDSLKDPAAYVRRLNKLLVELSA.

Residues 1 to 342 (MTVETQKETL…SNDLSLNVSR (342 aa)) form an a; substrate-binding region. Residues 343 to 559 (EILQKDPIID…EQDLGLQMRQ (217 aa)) are b. The tract at residues 560–634 (ILEASGQKVP…LNKLLVELSA (75 aa)) is c.

The protein belongs to the heat shock protein 90 family. Homodimer.

Its subcellular location is the cytoplasm. Molecular chaperone. Has ATPase activity. In Pseudomonas putida (strain ATCC 47054 / DSM 6125 / CFBP 8728 / NCIMB 11950 / KT2440), this protein is Chaperone protein HtpG.